A 197-amino-acid polypeptide reads, in one-letter code: Small ribosomal subunit protein uS5 (197 aa).

A disordered region spans residues 1 to 27 (MAEREQRGGRDQRGGGRERKEREERDS). The S5 DRBM domain occupies 29-92 (FVDKLVHINR…ESAKRNLTRV (64 aa)).

Belongs to the universal ribosomal protein uS5 family. As to quaternary structure, part of the 30S ribosomal subunit. Contacts proteins S4 and S8.

Functionally, with S4 and S12 plays an important role in translational accuracy. In terms of biological role, located at the back of the 30S subunit body where it stabilizes the conformation of the head with respect to the body. The chain is Small ribosomal subunit protein uS5 from Bradyrhizobium diazoefficiens (strain JCM 10833 / BCRC 13528 / IAM 13628 / NBRC 14792 / USDA 110).